Consider the following 326-residue polypeptide: Malate dehydrogenase (326 aa).

11–17 (GAAGQIG) lines the NAD(+) pocket. Substrate contacts are provided by arginine 92 and arginine 98. NAD(+) is bound by residues asparagine 105, glutamine 112, and 129 to 131 (VGN). Substrate contacts are provided by asparagine 131 and arginine 162. The active-site Proton acceptor is histidine 187.

The protein belongs to the LDH/MDH superfamily. MDH type 2 family.

The enzyme catalyses (S)-malate + NAD(+) = oxaloacetate + NADH + H(+). Catalyzes the reversible oxidation of malate to oxaloacetate. This Leptospira borgpetersenii serovar Hardjo-bovis (strain JB197) protein is Malate dehydrogenase.